Reading from the N-terminus, the 162-residue chain is Regulatory protein RecX (162 aa).

The protein belongs to the RecX family.

The protein localises to the cytoplasm. Functionally, modulates RecA activity. This is Regulatory protein RecX from Xanthomonas campestris pv. campestris (strain 8004).